We begin with the raw amino-acid sequence, 240 residues long: Proteasome subunit alpha (240 aa).

The protein belongs to the peptidase T1A family. As to quaternary structure, the 20S proteasome core is composed of 14 alpha and 14 beta subunits that assemble into four stacked heptameric rings, resulting in a barrel-shaped structure. The two inner rings, each composed of seven catalytic beta subunits, are sandwiched by two outer rings, each composed of seven alpha subunits. The catalytic chamber with the active sites is on the inside of the barrel. Has a gated structure, the ends of the cylinder being occluded by the N-termini of the alpha-subunits. Is capped at one or both ends by the proteasome regulatory ATPase, PAN.

The protein localises to the cytoplasm. The formation of the proteasomal ATPase PAN-20S proteasome complex, via the docking of the C-termini of PAN into the intersubunit pockets in the alpha-rings, triggers opening of the gate for substrate entry. Interconversion between the open-gate and close-gate conformations leads to a dynamic regulation of the 20S proteasome proteolysis activity. In terms of biological role, component of the proteasome core, a large protease complex with broad specificity involved in protein degradation. The sequence is that of Proteasome subunit alpha from Metallosphaera sedula (strain ATCC 51363 / DSM 5348 / JCM 9185 / NBRC 15509 / TH2).